The sequence spans 303 residues: Secreted mono- and diacylglycerol lipase LIP4 (303 aa).

The N-terminal stretch at Met1 to Cys16 is a signal peptide. The cysteines at positions 54 and 293 are disulfide-linked. Residue Ser167 is the Nucleophile of the active site. The active site involves Asp224.

It belongs to the AB hydrolase superfamily. Lipase family. Class 3 subfamily.

Its subcellular location is the secreted. It carries out the reaction a monoacylglycerol + H2O = glycerol + a fatty acid + H(+). It catalyses the reaction a diacylglycerol + H2O = a monoacylglycerol + a fatty acid + H(+). In terms of biological role, secreted lipase involved in Dandruff and seborrheic dermatitis (D/SD) probably via lipase-mediated breakdown of sebaceous lipids and release of irritating free fatty acids. Shows activity against monoglyceride and diglyceride substrates. Due to an absence of fatty acid synthase genes in Malassezia species, secretory lipases are essential for the yeast to generate free fatty acids from degradation of sebum and assimilate them as lipid sources for growth. Plays an essential role at the pathogen-host interface during disease progression. The polypeptide is Secreted mono- and diacylglycerol lipase LIP4 (Malassezia restricta (strain ATCC 96810 / NBRC 103918 / CBS 7877) (Seborrheic dermatitis infection agent)).